A 241-amino-acid chain; its full sequence is Adenosylcobinamide-GDP ribazoletransferase (241 aa).

Helical transmembrane passes span leucine 34–phenylalanine 54, valine 108–isoleucine 128, leucine 184–leucine 206, and phenylalanine 220–proline 240.

Belongs to the CobS family. Mg(2+) is required as a cofactor.

It is found in the cell membrane. The catalysed reaction is alpha-ribazole + adenosylcob(III)inamide-GDP = adenosylcob(III)alamin + GMP + H(+). It catalyses the reaction alpha-ribazole 5'-phosphate + adenosylcob(III)inamide-GDP = adenosylcob(III)alamin 5'-phosphate + GMP + H(+). It participates in cofactor biosynthesis; adenosylcobalamin biosynthesis; adenosylcobalamin from cob(II)yrinate a,c-diamide: step 7/7. Its function is as follows. Joins adenosylcobinamide-GDP and alpha-ribazole to generate adenosylcobalamin (Ado-cobalamin). Also synthesizes adenosylcobalamin 5'-phosphate from adenosylcobinamide-GDP and alpha-ribazole 5'-phosphate. This chain is Adenosylcobinamide-GDP ribazoletransferase, found in Methanopyrus kandleri (strain AV19 / DSM 6324 / JCM 9639 / NBRC 100938).